Here is a 517-residue protein sequence, read N- to C-terminus: Transcription factor MTB3 (517 aa).

Positions 290 to 331 are disordered; sequence GNSSNGYRSDEGEGKLYKEELDERKPRKRGRKPANGREEALN. A compositionally biased stretch (basic and acidic residues) spans 297–314; the sequence is RSDEGEGKLYKEELDERK. Residues 327–340 form a basic motif; degenerate region; that stretch reads EEALNHVEAERQRR. Residues 327-376 form the bHLH domain; sequence EEALNHVEAERQRREKLNQRFYALRAVVPNISKMDKASLLGDAIAYITDL. The segment at 341–376 is helix-loop-helix motif; sequence EKLNQRFYALRAVVPNISKMDKASLLGDAIAYITDL.

Its subcellular location is the nucleus. Functionally, transcription factor that negatively regulates jasmonate (JA) signaling. Negatively regulates JA-dependent response to wounding, JA-induced expression of defense genes, JA-dependent responses against herbivorous insects, and JA-dependent resistance against Botrytis cinerea infection. Plays a positive role in resistance against the bacterial pathogen Pseudomonas syringae pv tomato DC3000. The polypeptide is Transcription factor MTB3 (Solanum lycopersicum (Tomato)).